We begin with the raw amino-acid sequence, 162 residues long: Endoribonuclease YbeY (162 aa).

The Zn(2+) site is built by histidine 117, histidine 121, and histidine 127.

This sequence belongs to the endoribonuclease YbeY family. It depends on Zn(2+) as a cofactor.

Its subcellular location is the cytoplasm. Functionally, single strand-specific metallo-endoribonuclease involved in late-stage 70S ribosome quality control and in maturation of the 3' terminus of the 16S rRNA. The polypeptide is Endoribonuclease YbeY (Francisella tularensis subsp. mediasiatica (strain FSC147)).